A 196-amino-acid polypeptide reads, in one-letter code: Peroxiredoxin TSA1-B (196 aa).

The 159-residue stretch at 3–161 (PVVQQPAPSF…SLRLLEAFQF (159 aa)) folds into the Thioredoxin domain. 45–47 (TFV) contributes to the substrate binding site. Catalysis depends on C48, which acts as the Cysteine sulfenic acid (-SOH) intermediate. A substrate-binding site is contributed by R124. The interval 173–196 (WHPGDETIKPSPEASKEYFNKVNK) is disordered. The segment covering 175–196 (PGDETIKPSPEASKEYFNKVNK) has biased composition (basic and acidic residues).

This sequence belongs to the peroxiredoxin family. AhpC/Prx1 subfamily. Homodimer; disulfide-linked, upon oxidation.

Its subcellular location is the cell surface. The protein localises to the nucleus. It localises to the cytoplasm. It carries out the reaction a hydroperoxide + [thioredoxin]-dithiol = an alcohol + [thioredoxin]-disulfide + H2O. Its function is as follows. Thiol-specific peroxidase that catalyzes the reduction of hydrogen peroxide and organic hydroperoxides to water and alcohols, respectively. Plays a role in cell protection against oxidative stress by detoxifying peroxides and as sensor of hydrogen peroxide-mediated signaling events. Also involved in the correct composition of the hyphal cell wall. The protein is Peroxiredoxin TSA1-B of Candida albicans (strain SC5314 / ATCC MYA-2876) (Yeast).